The following is a 482-amino-acid chain: MKFIVKPHPEIFVKSESVRKRFTKILESNIRIIIQNRTESVAVFNRRDHIEVSANSHQYYQQVLEILTTTPGIQQVLEVKQSDFKDLHDIYEQVLELSRERIENKTFVVRAKRRGKHDFTSIELERYVGGGLNQSVESASVKLHNPDITIKIEVVDDKLNQILAHHKGLGGFPLGTQEDLLSLISGGFDSGVSSYLHIKRGSKVHYCFFNLGGPAHEIGVKQVAHFLWNKYGSSAKVRFISVDFEPVVAEILEKVEDGQMGVVLKRMFMRAAGMVAEKFDIQALVTGEALGQVSSQTLTNLRHIDVVTDRLILRPLINWDKDEIIKVARDIGTEDFAKTMPEYCGVISKKPTVKAVKEKLEAEEANFNFDILEQVVRNARQMDIRDIAKESAQAAPEVEQVQAIEEHAVVLDIRSPDEEDDSPLEIDGVEVKHIPFYKLSTQFGDLDQSKTYLLYCARGVMSRLQALYLQEQGFNNVKVYRP.

Residues Gln-61–His-165 form the THUMP domain. Residues Leu-183–Ile-184, Lys-265, Gly-287, and Gln-296 contribute to the ATP site. A disulfide bond links Cys-344 and Cys-456. A Rhodanese domain is found at Ile-404–Pro-482. Cys-456 functions as the Cysteine persulfide intermediate in the catalytic mechanism.

The protein belongs to the ThiI family.

It localises to the cytoplasm. The catalysed reaction is [ThiI sulfur-carrier protein]-S-sulfanyl-L-cysteine + a uridine in tRNA + 2 reduced [2Fe-2S]-[ferredoxin] + ATP + H(+) = [ThiI sulfur-carrier protein]-L-cysteine + a 4-thiouridine in tRNA + 2 oxidized [2Fe-2S]-[ferredoxin] + AMP + diphosphate. It catalyses the reaction [ThiS sulfur-carrier protein]-C-terminal Gly-Gly-AMP + S-sulfanyl-L-cysteinyl-[cysteine desulfurase] + AH2 = [ThiS sulfur-carrier protein]-C-terminal-Gly-aminoethanethioate + L-cysteinyl-[cysteine desulfurase] + A + AMP + 2 H(+). The protein operates within cofactor biosynthesis; thiamine diphosphate biosynthesis. Functionally, catalyzes the ATP-dependent transfer of a sulfur to tRNA to produce 4-thiouridine in position 8 of tRNAs, which functions as a near-UV photosensor. Also catalyzes the transfer of sulfur to the sulfur carrier protein ThiS, forming ThiS-thiocarboxylate. This is a step in the synthesis of thiazole, in the thiamine biosynthesis pathway. The sulfur is donated as persulfide by IscS. The sequence is that of tRNA sulfurtransferase from Vibrio vulnificus (strain YJ016).